Here is a 361-residue protein sequence, read N- to C-terminus: Peptide chain release factor 1 (361 aa).

Q233 bears the N5-methylglutamine mark. Positions 280 to 293 (ERRKKEQERADSRR) are enriched in basic and acidic residues. Residues 280-307 (ERRKKEQERADSRRGQVGSGDRSERIRT) are disordered.

The protein belongs to the prokaryotic/mitochondrial release factor family. In terms of processing, methylated by PrmC. Methylation increases the termination efficiency of RF1.

Its subcellular location is the cytoplasm. Its function is as follows. Peptide chain release factor 1 directs the termination of translation in response to the peptide chain termination codons UAG and UAA. This chain is Peptide chain release factor 1, found in Rickettsia massiliae (strain Mtu5).